The chain runs to 257 residues: Enterotoxin type A (257 aa).

The N-terminal stretch at 1–27 (MKKTAFILLLFIALTWTTSPLVNGSEK) is a signal peptide. Cysteine 120 and cysteine 130 are joined by a disulfide. Histidine 211, histidine 249, and aspartate 251 together coordinate Zn(2+).

This sequence belongs to the staphylococcal/streptococcal toxin family. In terms of assembly, monomer. Interacts with MHC class II molecules alpha/HLA-DRB1 and beta/HLA-DRA chains. The interaction with MHC-II molecules occurs at both zinc-dependent and zinc-independent sites. Interacts with T-cell receptor beta variable 7-9/TRBV7-9. Requires Zn(2+) as cofactor.

It localises to the secreted. Staphylococcal enterotoxin that activates the host immune system by binding as unprocessed molecules to major histocompatibility (MHC) complex class II and T-cell receptor (TCR) molecules. In turn, waves of cellular activation, cytokine production, and migration into the lung tissue and airways occur via alphabeta T-cells. Also causes the intoxication staphylococcal food poisoning syndrome. The illness is characterized by high fever, hypotension, diarrhea, shock, and in some cases death. The chain is Enterotoxin type A (sea) from Staphylococcus aureus (strain Newman).